A 214-amino-acid polypeptide reads, in one-letter code: Peptide methionine sulfoxide reductase MsrA 2 (214 aa).

Cys45 is an active-site residue.

This sequence belongs to the MsrA Met sulfoxide reductase family.

The catalysed reaction is L-methionyl-[protein] + [thioredoxin]-disulfide + H2O = L-methionyl-(S)-S-oxide-[protein] + [thioredoxin]-dithiol. It carries out the reaction [thioredoxin]-disulfide + L-methionine + H2O = L-methionine (S)-S-oxide + [thioredoxin]-dithiol. Its function is as follows. Has an important function as a repair enzyme for proteins that have been inactivated by oxidation. Catalyzes the reversible oxidation-reduction of methionine sulfoxide in proteins to methionine. The protein is Peptide methionine sulfoxide reductase MsrA 2 (msrA2) of Synechocystis sp. (strain ATCC 27184 / PCC 6803 / Kazusa).